Consider the following 837-residue polypeptide: Vacuolar membrane protease (837 aa).

Residues 1-36 are Cytoplasmic-facing; that stretch reads MSEEEVHDTSSEASEVFTNQPNAFVRGVRSIFGYRK. A helical membrane pass occupies residues 37–57; sequence TSLTLFVILTIVVTAGLSFYD. The Vacuolar portion of the chain corresponds to 58–355; it reads NSLELTIELP…FATPISALAR (298 aa). The N-linked (GlcNAc...) asparagine glycan is linked to Asn-143. Residues His-157 and Asp-169 each coordinate Zn(2+). Glu-201 functions as the Proton acceptor in the catalytic mechanism. Residues Glu-202, Glu-227, and His-299 each contribute to the Zn(2+) site. Residues 356 to 376 traverse the membrane as a helical segment; that stretch reads VNLVLLVLFPVVSTPLLFVIV. Residues 377–384 are Cytoplasmic-facing; sequence KYKKWKLR. Residues 385–405 traverse the membrane as a helical segment; that stretch reads VTNFLGVPLAMGLAVAVGQVG. Topologically, residues 406 to 415 are vacuolar; it reads NPMLVSSHPM. Residues 416–436 traverse the membrane as a helical segment; sequence MVVATTTSIVVLVYYVVLNGV. At 437–446 the chain is on the cytoplasmic side; sequence DWVNTSSDQK. The chain crosses the membrane as a helical span at residues 447-467; that stretch reads LVTMIEVSFVYWVVLVYVTWS. Residues 468-474 lie on the Vacuolar side of the membrane; that stretch reads GGDHTGE. The chain crosses the membrane as a helical span at residues 475-495; it reads FGVTVLFFVQASTSLLGLIGW. Topologically, residues 496–539 are cytoplasmic; sequence TFTRVRGGDEPLLSGEEERYGTEDERDTEKPLVEHNYDWSLQYL. A helical membrane pass occupies residues 540 to 560; that stretch reads LIVPVSSLVVYNSGWLVLEGV. A glycan (N-linked (GlcNAc...) asparagine) is linked at Asn-561. Residues 561-572 are Vacuolar-facing; it reads NKTVQESLASEH. A helical membrane pass occupies residues 573-593; it reads LIYWIVVVFSQFLVLPVVPFI. The Cytoplasmic portion of the chain corresponds to 594–598; the sequence is TKFNR. A helical transmembrane segment spans residues 599 to 619; it reads YIVLGLSVVAVVGVLMSMAVH. Over 620–837 the chain is Vacuolar; that stretch reads PFNQGSPMKL…LVGVVKHVDV (218 aa). An N-linked (GlcNAc...) asparagine glycan is attached at Asn-689.

This sequence belongs to the peptidase M28 family. Zn(2+) serves as cofactor.

Its subcellular location is the vacuole membrane. In terms of biological role, may be involved in vacuolar sorting and osmoregulation. The protein is Vacuolar membrane protease of Candida albicans (strain WO-1) (Yeast).